Consider the following 644-residue polypeptide: Exoribonuclease 2 (644 aa).

The 327-residue stretch at 190–516 folds into the RNB domain; sequence REDLTALDFI…INHRLLKALI (327 aa). In terms of domain architecture, S1 motif spans 562-644; the sequence is DSRFAAEIID…ENRSVIARPV (83 aa).

Belongs to the RNR ribonuclease family. RNase II subfamily.

Its subcellular location is the cytoplasm. The enzyme catalyses Exonucleolytic cleavage in the 3'- to 5'-direction to yield nucleoside 5'-phosphates.. In terms of biological role, involved in mRNA degradation. Hydrolyzes single-stranded polyribonucleotides processively in the 3' to 5' direction. This chain is Exoribonuclease 2, found in Sodalis glossinidius (strain morsitans).